Reading from the N-terminus, the 111-residue chain is uncharacterized protein (111 aa).

The protein resides in the cytoplasm. It localises to the nucleus. This is an uncharacterized protein from Saccharomyces cerevisiae (strain ATCC 204508 / S288c) (Baker's yeast).